A 336-amino-acid polypeptide reads, in one-letter code: MSQRSLPDEKSGLHPRNRHRQRYDFALLVEAHPPLAAFVRLNQYEDASIDFADAQAVKTLNQALLKCYYGIAAWDIPPQFLCPPIPGRADYVHCLADLLAAGNDGNMPYGGNVRVLDIGTGANLVYPIIGQKEYGWHFVGTDINVEALENAQGIVAANPGLAGAIELRLQRNVGAVFSGVVQESERFDLTMCNPPFHASQAAAMAGTERKWHHLERSRGKPTGKGVRRVRSGRMSGNRLNFGGQAAELYCEGGEEGFISRMIKESAAVGAQCLWFTTLVSKAATLPAVYRSLRAVDAYKVKTIDMAQGQKKSRFVAWTFHDTAGQRAWRRQHWRDV.

Residues 212 to 231 (HHLERSRGKPTGKGVRRVRS) are compositionally biased toward basic residues. Residues 212-234 (HHLERSRGKPTGKGVRRVRSGRM) form a disordered region.

Belongs to the methyltransferase superfamily. METTL16/RlmF family.

It localises to the cytoplasm. It catalyses the reaction adenosine(1618) in 23S rRNA + S-adenosyl-L-methionine = N(6)-methyladenosine(1618) in 23S rRNA + S-adenosyl-L-homocysteine + H(+). Its function is as follows. Specifically methylates the adenine in position 1618 of 23S rRNA. The protein is Ribosomal RNA large subunit methyltransferase F of Methylobacillus flagellatus (strain ATCC 51484 / DSM 6875 / VKM B-1610 / KT).